We begin with the raw amino-acid sequence, 194 residues long: Protein A43 (194 aa).

The signal sequence occupies residues 1–22 (MMMMKWIISILTMSIMPVLAYS). The Extracellular segment spans residues 23–165 (SSIFRFHSED…YKDINDKYND (143 aa)). N-linked (GlcNAc...) asparagine; by host glycosylation is found at Asn65 and Asn114. A helical membrane pass occupies residues 166–186 (IYDFTAICMLIASTLIVTIYV). Over 187–194 (FKKIKMNS) the chain is Cytoplasmic.

Belongs to the orthopoxvirus OPG172 protein family.

Its subcellular location is the host membrane. The protein localises to the host cell surface. The protein is Protein A43 (OPG172) of Homo sapiens (Human).